We begin with the raw amino-acid sequence, 1463 residues long: DNA polymerase III PolC-type (1463 aa).

Positions 425–581 (YVVFDVETTG…YDAEATGRLL (157 aa)) constitute an Exonuclease domain.

The protein belongs to the DNA polymerase type-C family. PolC subfamily.

The protein localises to the cytoplasm. It carries out the reaction DNA(n) + a 2'-deoxyribonucleoside 5'-triphosphate = DNA(n+1) + diphosphate. In terms of biological role, required for replicative DNA synthesis. This DNA polymerase also exhibits 3' to 5' exonuclease activity. The polypeptide is DNA polymerase III PolC-type (Streptococcus pneumoniae serotype 4 (strain ATCC BAA-334 / TIGR4)).